Consider the following 387-residue polypeptide: S-adenosylmethionine synthase (387 aa).

Position 16 (His-16) interacts with ATP. Asp-18 contacts Mg(2+). Position 44 (Glu-44) interacts with K(+). The L-methionine site is built by Glu-57 and Gln-100. Residues Gln-100–Arg-110 form a flexible loop region. Residues Asp-167 to Lys-169, Arg-232 to Phe-233, Asp-241, Arg-247 to Lys-248, Ala-264, and Lys-268 each bind ATP. Asp-241 contacts L-methionine. Lys-272 is an L-methionine binding site.

Belongs to the AdoMet synthase family. As to quaternary structure, homotetramer; dimer of dimers. The cofactor is Mg(2+). K(+) serves as cofactor.

It localises to the cytoplasm. The enzyme catalyses L-methionine + ATP + H2O = S-adenosyl-L-methionine + phosphate + diphosphate. Its pathway is amino-acid biosynthesis; S-adenosyl-L-methionine biosynthesis; S-adenosyl-L-methionine from L-methionine: step 1/1. Catalyzes the formation of S-adenosylmethionine (AdoMet) from methionine and ATP. The overall synthetic reaction is composed of two sequential steps, AdoMet formation and the subsequent tripolyphosphate hydrolysis which occurs prior to release of AdoMet from the enzyme. The chain is S-adenosylmethionine synthase from Cupriavidus pinatubonensis (strain JMP 134 / LMG 1197) (Cupriavidus necator (strain JMP 134)).